The primary structure comprises 138 residues: NADH dehydrogenase [ubiquinone] 1 alpha subcomplex subunit N7BM (138 aa).

This sequence belongs to the complex I NDUFA12 subunit family. Complex I is composed of 42 different subunits.

The protein localises to the mitochondrion inner membrane. Its function is as follows. Accessory subunit of the mitochondrial membrane respiratory chain NADH dehydrogenase (Complex I), that is believed not to be involved in catalysis. Complex I functions in the transfer of electrons from NADH to the respiratory chain. The immediate electron acceptor for the enzyme is believed to be ubiquinone. This chain is NADH dehydrogenase [ubiquinone] 1 alpha subcomplex subunit N7BM, found in Yarrowia lipolytica (strain CLIB 122 / E 150) (Yeast).